Reading from the N-terminus, the 430-residue chain is DNA polymerase IV 1 (430 aa).

Residues 45-225 (LAHIDCDAFY…KPVTLIWGVG (181 aa)) form the UmuC domain. The Mg(2+) site is built by aspartate 49 and aspartate 142. Glutamate 143 is a catalytic residue.

The protein belongs to the DNA polymerase type-Y family. Monomer. Requires Mg(2+) as cofactor.

It is found in the cytoplasm. The catalysed reaction is DNA(n) + a 2'-deoxyribonucleoside 5'-triphosphate = DNA(n+1) + diphosphate. Poorly processive, error-prone DNA polymerase involved in untargeted mutagenesis. Copies undamaged DNA at stalled replication forks, which arise in vivo from mismatched or misaligned primer ends. These misaligned primers can be extended by PolIV. Exhibits no 3'-5' exonuclease (proofreading) activity. May be involved in translesional synthesis, in conjunction with the beta clamp from PolIII. This is DNA polymerase IV 1 (dinB1) from Rhizobium meliloti (strain 1021) (Ensifer meliloti).